The sequence spans 119 residues: Beta-2-microglobulin (119 aa).

Positions 1–20 are cleaved as a signal peptide; sequence MVCSVVVALLALLSLSGLEA. In terms of domain architecture, Ig-like C1-type spans 25-114; that stretch reads PKIQVYSRHP…VTFSTPKTVK (90 aa). Cysteines 45 and 100 form a disulfide.

The protein belongs to the beta-2-microglobulin family. In terms of assembly, heterodimer of an alpha chain and a beta chain. Beta-2-microglobulin is the beta-chain of major histocompatibility complex class I molecules.

It is found in the secreted. In terms of biological role, component of the class I major histocompatibility complex (MHC). Involved in the presentation of peptide antigens to the immune system. This Cebuella pygmaea (Pygmy marmoset) protein is Beta-2-microglobulin (B2M).